The primary structure comprises 462 residues: Cysteine--tRNA ligase (462 aa).

Cysteine 30 contacts Zn(2+). The 'HIGH' region motif lies at 32–42 (MTVYDYCHIGH). Cysteine 214, histidine 239, and glutamate 243 together coordinate Zn(2+). A 'KMSKS' region motif is present at residues 271 to 275 (KMSKS). Residue lysine 274 coordinates ATP.

It belongs to the class-I aminoacyl-tRNA synthetase family. As to quaternary structure, monomer. Zn(2+) is required as a cofactor.

The protein localises to the cytoplasm. The catalysed reaction is tRNA(Cys) + L-cysteine + ATP = L-cysteinyl-tRNA(Cys) + AMP + diphosphate. This Herminiimonas arsenicoxydans protein is Cysteine--tRNA ligase.